The sequence spans 248 residues: UPF0524 protein C3orf70 homolog (248 aa).

A disordered region spans residues 169–248 (KESDTPKLGH…EVIETMETTV (80 aa)). Residues 200–227 (SCDEDTEEGAELSSEEDYSPESSWEPDE) are compositionally biased toward acidic residues.

This sequence belongs to the UPF0524 family.

May play a role in neuronal and neurobehavioral development. This chain is UPF0524 protein C3orf70 homolog, found in Mus musculus (Mouse).